Reading from the N-terminus, the 313-residue chain is Ornithine carbamoyltransferase (313 aa).

Carbamoyl phosphate contacts are provided by residues 61-64, Gln-88, Arg-112, and 139-142; these read STRT and HPCQ. L-ornithine is bound by residues Asn-170, Asp-228, and 232–233; that span reads SM. Residues 268–269 and Arg-296 contribute to the carbamoyl phosphate site; that span reads CL.

The protein belongs to the aspartate/ornithine carbamoyltransferase superfamily. OTCase family.

It is found in the cytoplasm. It catalyses the reaction carbamoyl phosphate + L-ornithine = L-citrulline + phosphate + H(+). It functions in the pathway amino-acid biosynthesis; L-arginine biosynthesis; L-arginine from L-ornithine and carbamoyl phosphate: step 1/3. Functionally, reversibly catalyzes the transfer of the carbamoyl group from carbamoyl phosphate (CP) to the N(epsilon) atom of ornithine (ORN) to produce L-citrulline. The protein is Ornithine carbamoyltransferase of Bordetella avium (strain 197N).